A 312-amino-acid chain; its full sequence is Olfactory receptor 8H3 (312 aa).

At 1–26 (MMGRRNDTNVADFILTGLSDSEEVQM) the chain is on the extracellular side. A glycan (N-linked (GlcNAc...) asparagine) is linked at Asn-6. The chain crosses the membrane as a helical span at residues 27–47 (ALFMLFLLIYLITMLGNVGML). Residues 48 to 55 (LIIRLDLQ) are Cytoplasmic-facing. Residues 56–76 (LHTPMYFFLTHLSFIDLSYST) form a helical membrane-spanning segment. Over 77–99 (VVTPKTLANLLTSNYISFTGCFA) the chain is Extracellular. An intrachain disulfide couples Cys-97 to Cys-189. Residues 100 to 120 (QMFCFVFLGTAECYLLSSMAY) traverse the membrane as a helical segment. Residues 121 to 139 (DRYAAICSPLHYTVIMPKR) lie on the Cytoplasmic side of the membrane. A helical membrane pass occupies residues 140-160 (LCLALITGPYVIGFMDSFVNV). At 161–197 (VSMSRLHFCDSNIIHHFFCDTSPILALSCTDTDNTEM) the chain is on the extracellular side. A helical transmembrane segment spans residues 198 to 217 (LIFIIAGSTLMVSLITISAS). At 218–237 (YVSILSTILKINSTSGKQKA) the chain is on the cytoplasmic side. The helical transmembrane segment at 238 to 258 (FSTCVSHLLGVTIFYGTMIFT) threads the bilayer. Topologically, residues 259-271 (YLKPRKSYSLGRD) are extracellular. A helical transmembrane segment spans residues 272 to 292 (QVAPVFYTIVIPMLNPLIYSL). The Cytoplasmic segment spans residues 293–312 (RNREVKNALIRVMQRRQDSR).

The protein belongs to the G-protein coupled receptor 1 family.

It is found in the cell membrane. Its function is as follows. Odorant receptor. The polypeptide is Olfactory receptor 8H3 (OR8H3) (Homo sapiens (Human)).